Reading from the N-terminus, the 550-residue chain is Coiled-coil domain-containing protein 60 (550 aa).

Residues 1–21 (MTKVPATKKLQSSPNSGAVRP) are disordered. Positions 71–98 (AILREETAKKKKQQQLQKLKEEERNKFQ) form a coiled coil. Disordered stretches follow at residues 219–293 (KFKI…EPLY) and 336–367 (AYKE…KKSK). Positions 235–256 (RGSTLSLSRASGGSSPQSSMIS) are enriched in low complexity. The span at 336-345 (AYKEMQTTLK) shows a compositional bias: polar residues.

The chain is Coiled-coil domain-containing protein 60 (CCDC60) from Homo sapiens (Human).